The sequence spans 453 residues: MREVISIHIGQAGVQVGNACWELYCLEHGIQPDGLMPSDKTIGVEDDAFNTFFSETGAGKHVPRAVFLDLEPTVVDEVRTGTYRQLFHPEQLITGKEDAANNYARGHYTIGKEIVDLCLDRIRKLADNCTGLQGFLVFSSVGGGTGSGLGALLLERLSVDYGKKSKLGFTVYPSPQVATAVVEPYNSVLSTHALLEHTDVAVMLDNEAIYDICRRSLDIQRPTYTNLNRLIAQVISSLTASLRFDGALNVDVTEFQTNLVPYPRIHFMLCSYAPVISAEKAYHEQLSVAEITNSAFEPASMMAKCDPRHGKYMACCLMYRGDVVPKDVNAAVATIKTKRTIQFVDWSPTGFKCGINYQPPTVVPGGDLAKVQRAVCMISNSTAIAEVFSRIDHKFDLMYAKRAFVHWYVGEGMEEGEFSEAREDLAALEKDYEEVGTESQEGDGEEGEDGGDQ.

Q11 serves as a coordination point for GTP. K40 bears the N6-acetyllysine mark. Residues E71, S140, G144, T145, T179, N206, and N228 each contribute to the GTP site. E71 contributes to the Mg(2+) binding site. E254 is a catalytic residue. Residues E429–Q453 form a disordered region. The segment covering D431–Q453 has biased composition (acidic residues).

The protein belongs to the tubulin family. In terms of assembly, dimer of alpha and beta chains. A typical microtubule is a hollow water-filled tube with an outer diameter of 25 nm and an inner diameter of 15 nM. Alpha-beta heterodimers associate head-to-tail to form protofilaments running lengthwise along the microtubule wall with the beta-tubulin subunit facing the microtubule plus end conferring a structural polarity. Microtubules usually have 13 protofilaments but different protofilament numbers can be found in some organisms and specialized cells. Requires Mg(2+) as cofactor. Acetylation of alpha chains at Lys-40 stabilizes microtubules and affects affinity and processivity of microtubule motors. This modification has a role in multiple cellular functions, ranging from cell motility, cell cycle progression or cell differentiation to intracellular trafficking and signaling.

It is found in the cytoplasm. The protein localises to the cytoskeleton. The catalysed reaction is GTP + H2O = GDP + phosphate + H(+). Tubulin is the major constituent of microtubules, a cylinder consisting of laterally associated linear protofilaments composed of alpha- and beta-tubulin heterodimers. Microtubules grow by the addition of GTP-tubulin dimers to the microtubule end, where a stabilizing cap forms. Below the cap, tubulin dimers are in GDP-bound state, owing to GTPase activity of alpha-tubulin. In Naegleria gruberi (Amoeba), this protein is Tubulin alpha-1/2/3 chain (TBA1).